A 204-amino-acid polypeptide reads, in one-letter code: Recombination protein RecR (204 aa).

The C4-type zinc finger occupies 61 to 76; the sequence is CACCNTFSETQVCSTC. Residues 84 to 183 form the Toprim domain; sequence SLLCIVETPA…KVTRIARGIP (100 aa).

It belongs to the RecR family.

In terms of biological role, may play a role in DNA repair. It seems to be involved in an RecBC-independent recombinational process of DNA repair. It may act with RecF and RecO. The chain is Recombination protein RecR from Polynucleobacter necessarius subsp. necessarius (strain STIR1).